Consider the following 741-residue polypeptide: Catalase-peroxidase (741 aa).

An N-terminal signal peptide occupies residues 1 to 23 (MLKKIVTALGMSGMLLASSNAIA). The tryptophyl-tyrosyl-methioninium (Trp-Tyr) (with M-249) cross-link spans 102–223 (WHDAGTYRIY…YAATQMGLIY (122 aa)). Histidine 103 functions as the Proton acceptor in the catalytic mechanism. Residues 223-249 (YVNPEGPDGKPDIKGAASEIRQAFRAM) constitute a cross-link (tryptophyl-tyrosyl-methioninium (Tyr-Met) (with W-102)). A heme b-binding site is contributed by histidine 264.

It belongs to the peroxidase family. Peroxidase/catalase subfamily. In terms of assembly, homodimer or homotetramer. It depends on heme b as a cofactor. Post-translationally, formation of the three residue Trp-Tyr-Met cross-link is important for the catalase, but not the peroxidase activity of the enzyme.

The catalysed reaction is H2O2 + AH2 = A + 2 H2O. The enzyme catalyses 2 H2O2 = O2 + 2 H2O. Functionally, bifunctional enzyme with both catalase and broad-spectrum peroxidase activity. This Francisella tularensis subsp. tularensis (strain WY96-3418) protein is Catalase-peroxidase.